The primary structure comprises 1301 residues: Zinc finger protein 532 (1301 aa).

Disordered regions lie at residues 26-206 (PKAA…RETE), 223-266 (AEDK…SSSK), and 281-366 (KAAS…IKTI). Basic and acidic residues predominate over residues 32 to 52 (SGHDDHESHMKQNAHGEDDSH). The segment covering 84-101 (PTGNGLHNGFLTASSLDS) has biased composition (polar residues). A compositionally biased stretch (basic and acidic residues) spans 102–111 (YSKDGAKSLK). The segment covering 122 to 133 (KDSTFSQFSPIS) has biased composition (polar residues). Ser130, Ser133, and Ser134 each carry phosphoserine. Residues 136 to 151 (EEFDDDEKIEVDDPPD) are compositionally biased toward acidic residues. Positions 158–170 (SFRSNVLTGSAPQ) are enriched in polar residues. Lys175 is modified (N6-acetyllysine). The span at 182-195 (ENSSKTGLSTSGNV) shows a compositional bias: polar residues. 2 stretches are compositionally biased toward basic and acidic residues: residues 196-206 (EKNKAVKRETE) and 223-250 (AEDK…EKND). Thr205 bears the Phosphothreonine mark. Phosphoserine is present on residues Ser252, Ser307, and Ser314. The segment covering 303–315 (EVNDSPRAADKSP) has biased composition (basic and acidic residues). Residues 337 to 359 (SISSENSSKGSPSSPAGSTPAIP) are compositionally biased toward low complexity. Ser434 is modified (phosphoserine). Glycyl lysine isopeptide (Lys-Gly) (interchain with G-Cter in SUMO2) cross-links involve residues Lys459 and Lys516. The C2H2-type 1; degenerate zinc finger occupies 616–635 (YKCLECGDSFALEKSLTQHY). The C2H2-type 2; degenerate zinc finger occupies 754–779 (LKCLECNEVFQDETSLATHFQQAADT). C2H2-type zinc fingers lie at residues 783 to 805 (KTCT…QRIH), 842 to 865 (FRCV…QGSH), 870 to 893 (YKCP…YTQH), 905 to 927 (YKCS…FDQH), and 936 to 959 (FKCP…KSMH). Lys980 participates in a covalent cross-link: Glycyl lysine isopeptide (Lys-Gly) (interchain with G-Cter in SUMO2). The tract at residues 983 to 1017 (TQNSANQNKEDTKSMNGKEKLEKKSPSPVKKSMET) is disordered. Basic and acidic residues predominate over residues 990–1017 (NKEDTKSMNGKEKLEKKSPSPVKKSMET). C2H2-type zinc fingers lie at residues 1025–1048 (WTCW…RKEH) and 1055–1078 (HPCR…RIKH). Residues 1085-1111 (YACSHCPDSRRTFTKRLMLEKHVQLMH) form a C2H2-type 10; degenerate zinc finger. A Phosphoserine modification is found at Ser1140. Residues Lys1144 and Lys1167 each participate in a glycyl lysine isopeptide (Lys-Gly) (interchain with G-Cter in SUMO2) cross-link. The C2H2-type 11 zinc-finger motif lies at 1203-1226 (YQCRECGLCYTSHVSLSRHLFIVH). Residues 1230 to 1263 (EPQPVSKQNGAGEDNQQENKPSHEDESPDGAVSD) form a disordered region. The segment at 1264-1286 (RKCKVCAKTFETEAALNTHMRTH) adopts a C2H2-type 12 zinc-finger fold.

The protein belongs to the krueppel C2H2-type zinc-finger protein family.

It localises to the nucleus. Functionally, may be involved in transcriptional regulation. The polypeptide is Zinc finger protein 532 (ZNF532) (Homo sapiens (Human)).